Reading from the N-terminus, the 372-residue chain is Caytaxin (372 aa).

The disordered stretch occupies residues 1 to 58 (MGTTEATLRMENVDVRDEWQDEDLPRPLPEDTGVERLGGAVEDSSSPPSTLNLSGAHR). Basic and acidic residues predominate over residues 11 to 29 (ENVDVRDEWQDEDLPRPLP). Over residues 43–53 (DSSSPPSTLNL) the composition is skewed to polar residues. Ser-54 carries the post-translational modification Phosphoserine. The required for interaction with KLC1 stretch occupies residues 115–120 (ELEWED). A CRAL-TRIO domain is found at 171–328 (IRPYMKVVTH…CVLQYEEQRL (158 aa)). The segment at 190 to 372 (AIIVFAACFL…ATEDQETSMS (183 aa)) is mediates interaction with GLS. The tract at residues 329–372 (RAKRESTRPPQPEFLLPRSEEKPETVEEEDRAAEATEDQETSMS) is disordered. The segment covering 354–372 (VEEEDRAAEATEDQETSMS) has biased composition (acidic residues).

Interacts with KLC1; may link mitochondria to KLC1 and regulate mitochondria localization into neuron projections. Interacts with GLS; the interaction is direct and may control GLS localization, negatively regulating its activity. Interacts with PIN1 (via WW domain); upon NGF stimulation. The interaction with PIN1 and GLS is competitive. In terms of processing, cleaved by CASP3 and CASP7. The potential C-terminal product released by CASP3 cleavage may inhibit the ERK signaling pathway through MAP2K2. May be ubiquitinated by STUB1. In terms of tissue distribution, neuronal tissues specific. Strongly expressed in brain. Expressed in virtually all parts of the adult brain, including cortex, cerebellum and olfactory bulbs. Enriched in hippocampus, cerebellar cortex, deep cerebellar nuclei, and pontine nuclei (at protein level).

It localises to the cell projection. It is found in the axon. Its subcellular location is the dendrite. The protein resides in the presynapse. The protein localises to the mitochondrion. It localises to the growth cone. It is found in the cytoplasm. Its function is as follows. Functions in the development of neural tissues, particularly the postnatal maturation of the cerebellar cortex. May play a role in neurotransmission through regulation of glutaminase/GLS, an enzyme responsible for the production in neurons of the glutamate neurotransmitter. Alternatively, may regulate the localization of mitochondria within axons and dendrites. The protein is Caytaxin (Atcay) of Mus musculus (Mouse).